Consider the following 149-residue polypeptide: Nucleoside diphosphate kinase 1 (149 aa).

ATP is bound by residues Lys-9, Phe-57, Arg-85, Thr-91, Arg-102, and Asn-112. The active-site Pros-phosphohistidine intermediate is the His-115.

This sequence belongs to the NDK family. It depends on Mg(2+) as a cofactor. Post-translationally, autophosphorylated.

It carries out the reaction a 2'-deoxyribonucleoside 5'-diphosphate + ATP = a 2'-deoxyribonucleoside 5'-triphosphate + ADP. The enzyme catalyses a ribonucleoside 5'-diphosphate + ATP = a ribonucleoside 5'-triphosphate + ADP. Functionally, major role in the synthesis of nucleoside triphosphates other than ATP. The ATP gamma phosphate is transferred to the NDP beta phosphate via a ping-pong mechanism, using a phosphorylated active-site intermediate. Also exhibits a kinase-like activity towards histone H1. This is Nucleoside diphosphate kinase 1 (NDPK1) from Saccharum officinarum (Sugarcane).